Consider the following 212-residue polypeptide: MVQPCSAYGCKNRYDKDKPVSFHKFPLTRPSLCKEWEAAVRRKNFKPTKYSSICSEHFTPDCFKRECNNKLLKENAVPTIFLCTEPHDKKEDLEPQEQLPPPPLPPPVSQVDAAIGLLMPPLQTPVNLSVFCDHNYTVEDTMHQRKRIHQLEQQVEKLRKKLKTAQQRCRRQERQLEKLKEVVHFQKEKDNVSERGYVILPNDYFEIVEVPA.

The THAP-type zinc finger occupies 5 to 57; the sequence is CSAYGCKNRYDKDKPVSFHKFPLTRPSLCKEWEAAVRRKNFKPTKYSSICSEH. Residues 133-136 carry the HCFC1-binding motif (HBM) motif; that stretch reads DHNY. Residues 138-189 are a coiled coil; sequence VEDTMHQRKRIHQLEQQVEKLRKKLKTAQQRCRRQERQLEKLKEVVHFQKEK.

It belongs to the THAP1 family. In terms of assembly, interacts with PAWR. Component of a THAP1/THAP3-HCFC1-OGT complex that contains, either THAP1 or THAP3, HCFC1 and OGT. Interacts with OGT. Interacts (via the HBM) with HCFC1 (via the Kelch-repeat domain); the interaction recruits HCFC1 to the RRM1 promoter.

The protein localises to the nucleus. It is found in the nucleoplasm. Its subcellular location is the PML body. Functionally, DNA-binding transcription regulator that regulates endothelial cell proliferation and G1/S cell-cycle progression. Specifically binds the 5'-[AT]NTNN[GT]GGCA[AGT]-3' core DNA sequence and acts by modulating expression of pRB-E2F cell-cycle target genes, including RRM1. Component of a THAP1/THAP3-HCFC1-OGT complex that is required for the regulation of the transcriptional activity of RRM1. May also have pro-apoptotic activity by potentiating both serum-withdrawal and TNF-induced apoptosis. The polypeptide is THAP domain-containing protein 1 (THAP1) (Macaca fascicularis (Crab-eating macaque)).